The sequence spans 330 residues: Methylthioribose-1-phosphate isomerase (330 aa).

Residues 49–51 (RGA), Arg-83, and Gln-179 each bind substrate. The Proton donor role is filled by Asp-220. Position 230-231 (230-231 (NK)) interacts with substrate.

It belongs to the eIF-2B alpha/beta/delta subunits family. MtnA subfamily.

It carries out the reaction 5-(methylsulfanyl)-alpha-D-ribose 1-phosphate = 5-(methylsulfanyl)-D-ribulose 1-phosphate. Its pathway is amino-acid biosynthesis; L-methionine biosynthesis via salvage pathway; L-methionine from S-methyl-5-thio-alpha-D-ribose 1-phosphate: step 1/6. Functionally, catalyzes the interconversion of methylthioribose-1-phosphate (MTR-1-P) into methylthioribulose-1-phosphate (MTRu-1-P). This is Methylthioribose-1-phosphate isomerase from Thermus thermophilus (strain ATCC BAA-163 / DSM 7039 / HB27).